Consider the following 377-residue polypeptide: Leukocyte elastase inhibitor (377 aa).

At methionine 1 the chain carries N-acetylmethionine.

It belongs to the serpin family. Ov-serpin subfamily.

The protein localises to the cytoplasm. Regulates the activity of the neutrophil proteases. In Xenopus tropicalis (Western clawed frog), this protein is Leukocyte elastase inhibitor (serpinb1).